Here is a 938-residue protein sequence, read N- to C-terminus: Isoleucine--tRNA ligase (938 aa).

Residues 58 to 68 carry the 'HIGH' region motif; sequence PYANGSIHIGH. N6-acetyllysine is present on Lys183. Glu561 is an L-isoleucyl-5'-AMP binding site. Residues 602-606 carry the 'KMSKS' region motif; that stretch reads KMSKS. Lys605 provides a ligand contact to ATP. The Zn(2+) site is built by Cys901, Cys904, Cys921, and Cys924.

It belongs to the class-I aminoacyl-tRNA synthetase family. IleS type 1 subfamily. In terms of assembly, monomer. Requires Zn(2+) as cofactor.

It localises to the cytoplasm. It carries out the reaction tRNA(Ile) + L-isoleucine + ATP = L-isoleucyl-tRNA(Ile) + AMP + diphosphate. Functionally, catalyzes the attachment of isoleucine to tRNA(Ile). As IleRS can inadvertently accommodate and process structurally similar amino acids such as valine, to avoid such errors it has two additional distinct tRNA(Ile)-dependent editing activities. One activity is designated as 'pretransfer' editing and involves the hydrolysis of activated Val-AMP. The other activity is designated 'posttransfer' editing and involves deacylation of mischarged Val-tRNA(Ile). In Shigella boydii serotype 4 (strain Sb227), this protein is Isoleucine--tRNA ligase.